A 490-amino-acid polypeptide reads, in one-letter code: Betaine aldehyde dehydrogenase (490 aa).

K(+) is bound by residues T26, I27, and D93. 150-152 lines the NAD(+) pocket; that stretch reads GAW. The active-site Charge relay system is the K162. NAD(+) is bound at residue 176-179; it reads KPSE. V180 contacts K(+). Residue 230 to 233 participates in NAD(+) binding; that stretch reads GVAS. L246 contacts K(+). E252 functions as the Proton acceptor in the catalytic mechanism. NAD(+) is bound by residues G254, C286, and E387. C286 (nucleophile) is an active-site residue. Cysteine sulfenic acid (-SOH) is present on C286. 2 residues coordinate K(+): K457 and G460. The Charge relay system role is filled by E464.

It belongs to the aldehyde dehydrogenase family. As to quaternary structure, dimer of dimers. Requires K(+) as cofactor.

The enzyme catalyses betaine aldehyde + NAD(+) + H2O = glycine betaine + NADH + 2 H(+). It participates in amine and polyamine biosynthesis; betaine biosynthesis via choline pathway; betaine from betaine aldehyde: step 1/1. In terms of biological role, involved in the biosynthesis of the osmoprotectant glycine betaine. Catalyzes the irreversible oxidation of betaine aldehyde to the corresponding acid. In Klebsiella pneumoniae (strain 342), this protein is Betaine aldehyde dehydrogenase.